Here is a 451-residue protein sequence, read N- to C-terminus: Potassium/sodium uptake protein NtpJ (451 aa).

Transmembrane regions (helical) follow at residues 18 to 38 (IAAG…LPFF), 46 to 66 (HFID…LTTL), 78 to 98 (FLIM…PILF), 133 to 153 (ILKF…VVFI), 162 to 182 (IWFS…DLLG), 192 to 212 (VYLI…FIVW), 230 to 250 (VALS…LITE), 293 to 313 (LILT…AGGL), 350 to 370 (ALTL…VLSV), 380 to 400 (IEYI…TMGL), and 410 to 430 (LVII…VFSL).

Belongs to the TrkH potassium transport family.

It is found in the cell membrane. Its function is as follows. Mediates electrogenic transport of potassium as well as sodium. Acts probably as a potassium-sodium cotransporter. Major sodium reentry pathway at high pH values. This chain is Potassium/sodium uptake protein NtpJ (ntpJ), found in Enterococcus hirae (strain ATCC 9790 / DSM 20160 / JCM 8729 / LMG 6399 / NBRC 3181 / NCIMB 6459 / NCDO 1258 / NCTC 12367 / WDCM 00089 / R).